The chain runs to 586 residues: CTP synthase 2 (586 aa).

The region spanning 300–554 (SIALVGKYTK…LAATGTLNTH (255 aa)) is the Glutamine amidotransferase type-1 domain. Catalysis depends on for GATase activity residues Cys399, His526, and Glu528. A phosphoserine mark is found at Ser568, Ser571, and Ser574.

This sequence belongs to the CTP synthase family.

The enzyme catalyses UTP + L-glutamine + ATP + H2O = CTP + L-glutamate + ADP + phosphate + 2 H(+). Its pathway is pyrimidine metabolism; CTP biosynthesis via de novo pathway; CTP from UDP: step 2/2. Its function is as follows. Catalyzes the ATP-dependent amination of UTP to CTP with either L-glutamine or ammonia as the source of nitrogen. Constitutes the rate-limiting enzyme in the synthesis of cytosine nucleotides. The chain is CTP synthase 2 (Ctps2) from Rattus norvegicus (Rat).